Here is a 237-residue protein sequence, read N- to C-terminus: Ribose-5-phosphate isomerase A (237 aa).

Residues 30 to 33 (SGST), 87 to 90 (DGAD), and 100 to 103 (KGGG) contribute to the substrate site. The active-site Proton acceptor is the E109. Residue K127 participates in substrate binding.

The protein belongs to the ribose 5-phosphate isomerase family. As to quaternary structure, homodimer.

It carries out the reaction aldehydo-D-ribose 5-phosphate = D-ribulose 5-phosphate. Its pathway is carbohydrate degradation; pentose phosphate pathway; D-ribose 5-phosphate from D-ribulose 5-phosphate (non-oxidative stage): step 1/1. Catalyzes the reversible conversion of ribose-5-phosphate to ribulose 5-phosphate. The sequence is that of Ribose-5-phosphate isomerase A from Prochlorococcus marinus (strain SARG / CCMP1375 / SS120).